We begin with the raw amino-acid sequence, 292 residues long: Transforming growth factor-beta receptor type 3-like protein (292 aa).

The signal sequence occupies residues 1–16 (MLGTVLLLALLPGITT). The 154-residue stretch at 17-170 (LPSGPPAPPF…APAPLTPPPP (154 aa)) folds into the ZP; truncated domain. The Extracellular segment spans residues 17 to 244 (LPSGPPAPPF…PAPAALEPAP (228 aa)). Cysteines 85 and 147 form a disulfide. Positions 160–236 (RAPAPLTPPP…AVRPEPPAPA (77 aa)) are disordered. 2 stretches are compositionally biased toward pro residues: residues 164–175 (PLTPPPPPPPSR) and 213–222 (PRPPPRPPKS). The helical transmembrane segment at 245-265 (VVALVLAAFVLGAALAAGLGL) threads the bilayer. The Cytoplasmic portion of the chain corresponds to 266–292 (VCAHSAPHAPGPPARASPSGPQPRRSQ). The interval 273 to 292 (HAPGPPARASPSGPQPRRSQ) is disordered. The span at 281–292 (ASPSGPQPRRSQ) shows a compositional bias: low complexity.

Glycosylated. As to expression, expressed in pituitary gland gonadotrope cells.

It is found in the cell membrane. Functionally, expressed in gonadotrope cells, acts as an inhibin B coreceptor and regulates follicle-stimulating hormone (FSH) levels and female fertility. This chain is Transforming growth factor-beta receptor type 3-like protein, found in Homo sapiens (Human).